A 204-amino-acid chain; its full sequence is Pro-glucagon (204 aa).

A signal peptide spans 1–20 (MTSMYFVAGLLLMIVQGSWQ). Positions 84–109 (SGQQGVEEREKENLLDQLSSNGLARH) are excised as a propeptide. At arginine 145 the chain carries Arginine amide. Propeptides lie at residues 149–161 (DFLEEAGTADDIG) and 197–204 (RDLLGEYQ).

Belongs to the glucagon family. In terms of tissue distribution, isoform LPII is expressed in both pancreas and intestine. Expression of isoform LPI is restricted to the pancreas. Neither isoform is detected in salivary glands.

The protein resides in the secreted. Its function is as follows. Plays a key role in glucose metabolism and homeostasis. Regulates blood glucose by increasing gluconeogenesis and decreasing glycolysis. Potent stimulator of glucose-dependent insulin release. Plays important roles on gastric motility and the suppression of plasma glucagon levels. Functionally, stimulates intestinal growth and up-regulates villus height in the small intestine, concomitant with increased crypt cell proliferation and decreased enterocyte apoptosis. The sequence is that of Pro-glucagon (GCG) from Heloderma suspectum (Gila monster).